We begin with the raw amino-acid sequence, 433 residues long: Eukaryotic translation initiation factor 3 subunit E (433 aa).

One can recognise a PCI domain in the interval 217-390; sequence FFNHGKGRDL…GHVVMGTQPL (174 aa).

The protein belongs to the eIF-3 subunit E family. As to quaternary structure, component of the eukaryotic translation initiation factor 3 (eIF-3) complex.

It is found in the cytoplasm. Its function is as follows. Component of the eukaryotic translation initiation factor 3 (eIF-3) complex, which is involved in protein synthesis of a specialized repertoire of mRNAs and, together with other initiation factors, stimulates binding of mRNA and methionyl-tRNAi to the 40S ribosome. The eIF-3 complex specifically targets and initiates translation of a subset of mRNAs involved in cell proliferation. The polypeptide is Eukaryotic translation initiation factor 3 subunit E (eIF3-S6) (Anopheles gambiae (African malaria mosquito)).